Here is a 200-residue protein sequence, read N- to C-terminus: Recombination protein RecR (200 aa).

The segment at 59–74 adopts a C4-type zinc-finger fold; the sequence is CSVCFHLSADPVCDIC. The region spanning 82–176 is the Toprim domain; the sequence is TVICVVADSR…RVTRIAFGLP (95 aa).

The protein belongs to the RecR family.

Its function is as follows. May play a role in DNA repair. It seems to be involved in an RecBC-independent recombinational process of DNA repair. It may act with RecF and RecO. This Acaryochloris marina (strain MBIC 11017) protein is Recombination protein RecR.